The sequence spans 273 residues: Large ribosomal subunit protein uL2 (273 aa).

2 disordered regions span residues 28–53 (KPFAPLVEKNSKSGGRNNNGRITTRH) and 221–273 (RGTA…RRTK). Over residues 39–48 (KSGGRNNNGR) the composition is skewed to low complexity.

It belongs to the universal ribosomal protein uL2 family. In terms of assembly, part of the 50S ribosomal subunit. Forms a bridge to the 30S subunit in the 70S ribosome.

In terms of biological role, one of the primary rRNA binding proteins. Required for association of the 30S and 50S subunits to form the 70S ribosome, for tRNA binding and peptide bond formation. It has been suggested to have peptidyltransferase activity; this is somewhat controversial. Makes several contacts with the 16S rRNA in the 70S ribosome. This is Large ribosomal subunit protein uL2 from Pectobacterium atrosepticum (strain SCRI 1043 / ATCC BAA-672) (Erwinia carotovora subsp. atroseptica).